Here is a 187-residue protein sequence, read N- to C-terminus: uncharacterized protein (187 aa).

The N-myristoyl glycine; by host moiety is linked to residue Gly2.

The protein belongs to the mimivirus L332/L333/L334 family.

This is an uncharacterized protein from Acanthamoeba polyphaga (Amoeba).